A 140-amino-acid chain; its full sequence is Phosphopantetheine adenylyltransferase (140 aa).

Position 9 (serine 9) interacts with substrate. ATP is bound by residues 9 to 10 (SF) and histidine 17. The substrate site is built by lysine 41, threonine 74, and arginine 88. Residues 89–91 (GLR), glutamate 99, and 124–130 (KRSLSST) each bind ATP.

It belongs to the bacterial CoaD family. As to quaternary structure, homohexamer. Mg(2+) serves as cofactor.

It is found in the cytoplasm. The enzyme catalyses (R)-4'-phosphopantetheine + ATP + H(+) = 3'-dephospho-CoA + diphosphate. The protein operates within cofactor biosynthesis; coenzyme A biosynthesis; CoA from (R)-pantothenate: step 4/5. In terms of biological role, reversibly transfers an adenylyl group from ATP to 4'-phosphopantetheine, yielding dephospho-CoA (dPCoA) and pyrophosphate. The polypeptide is Phosphopantetheine adenylyltransferase (Mycoplasma capricolum subsp. capricolum (strain California kid / ATCC 27343 / NCTC 10154)).